Reading from the N-terminus, the 467-residue chain is Bifunctional protein GlmU (467 aa).

Positions 1–229 (MEKNTIILAA…FSESMGVNDR (229 aa)) are pyrophosphorylase. Residues 8 to 11 (LAAG), Lys-22, Gln-72, 77 to 78 (GT), 100 to 102 (SGD), Gly-139, Glu-154, Asn-169, and Asn-227 contribute to the UDP-N-acetyl-alpha-D-glucosamine site. Asp-102 is a Mg(2+) binding site. Asn-227 is a binding site for Mg(2+). Residues 230–250 (LALSKATKVMQRRINEEHMVN) form a linker region. The N-acetyltransferase stretch occupies residues 251–467 (GVTIIDPENT…ALKAEEENNK (217 aa)). UDP-N-acetyl-alpha-D-glucosamine is bound by residues Arg-332 and Lys-350. The active-site Proton acceptor is His-362. UDP-N-acetyl-alpha-D-glucosamine contacts are provided by Tyr-365 and Asn-376. Residues 385–386 (NY), Ser-404, Ala-422, and Arg-439 contribute to the acetyl-CoA site.

This sequence in the N-terminal section; belongs to the N-acetylglucosamine-1-phosphate uridyltransferase family. The protein in the C-terminal section; belongs to the transferase hexapeptide repeat family. In terms of assembly, homotrimer. Mg(2+) serves as cofactor.

Its subcellular location is the cytoplasm. The enzyme catalyses alpha-D-glucosamine 1-phosphate + acetyl-CoA = N-acetyl-alpha-D-glucosamine 1-phosphate + CoA + H(+). It catalyses the reaction N-acetyl-alpha-D-glucosamine 1-phosphate + UTP + H(+) = UDP-N-acetyl-alpha-D-glucosamine + diphosphate. It functions in the pathway nucleotide-sugar biosynthesis; UDP-N-acetyl-alpha-D-glucosamine biosynthesis; N-acetyl-alpha-D-glucosamine 1-phosphate from alpha-D-glucosamine 6-phosphate (route II): step 2/2. It participates in nucleotide-sugar biosynthesis; UDP-N-acetyl-alpha-D-glucosamine biosynthesis; UDP-N-acetyl-alpha-D-glucosamine from N-acetyl-alpha-D-glucosamine 1-phosphate: step 1/1. The protein operates within bacterial outer membrane biogenesis; LPS lipid A biosynthesis. Catalyzes the last two sequential reactions in the de novo biosynthetic pathway for UDP-N-acetylglucosamine (UDP-GlcNAc). The C-terminal domain catalyzes the transfer of acetyl group from acetyl coenzyme A to glucosamine-1-phosphate (GlcN-1-P) to produce N-acetylglucosamine-1-phosphate (GlcNAc-1-P), which is converted into UDP-GlcNAc by the transfer of uridine 5-monophosphate (from uridine 5-triphosphate), a reaction catalyzed by the N-terminal domain. This chain is Bifunctional protein GlmU, found in Pediococcus pentosaceus (strain ATCC 25745 / CCUG 21536 / LMG 10740 / 183-1w).